The primary structure comprises 193 residues: Phosphoheptose isomerase (193 aa).

In terms of domain architecture, SIS spans 37 to 193 (LADSFKAGGK…QLIEKEMVKA (157 aa)). A substrate-binding site is contributed by 52–54 (NGG). Zn(2+)-binding residues include histidine 61 and glutamate 65. Substrate contacts are provided by residues glutamate 65, 93–94 (ND), 119–121 (STS), serine 124, and glutamine 172. Zn(2+) contacts are provided by glutamine 172 and histidine 180.

This sequence belongs to the SIS family. GmhA subfamily. In terms of assembly, homotetramer. It depends on Zn(2+) as a cofactor.

The protein localises to the cytoplasm. It catalyses the reaction 2 D-sedoheptulose 7-phosphate = D-glycero-alpha-D-manno-heptose 7-phosphate + D-glycero-beta-D-manno-heptose 7-phosphate. It participates in carbohydrate biosynthesis; D-glycero-D-manno-heptose 7-phosphate biosynthesis; D-glycero-alpha-D-manno-heptose 7-phosphate and D-glycero-beta-D-manno-heptose 7-phosphate from sedoheptulose 7-phosphate: step 1/1. Its pathway is bacterial outer membrane biogenesis; LPS core biosynthesis. In terms of biological role, catalyzes the isomerization of sedoheptulose 7-phosphate in D-glycero-D-manno-heptose 7-phosphate. The chain is Phosphoheptose isomerase from Yersinia pestis.